Consider the following 216-residue polypeptide: U1 small nuclear ribonucleoprotein C (216 aa).

The Matrin-type zinc-finger motif lies at 4–36 (FFCDYCDVYLTHDSMSVRKAHNAGRNHLRNVVE). Composition is skewed to pro residues over residues 68–80 (AMAP…PPFG), 87–198 (QLPP…PAPP), and 206–216 (PGPPPGLSEKR). A disordered region spans residues 68–216 (AMAPPGAFPP…GPPPGLSEKR (149 aa)).

It belongs to the U1 small nuclear ribonucleoprotein C family. U1 snRNP is composed of the 7 core Sm proteins B/B', D1, D2, D3, E, F and G that assemble in a heptameric protein ring on the Sm site of the small nuclear RNA to form the core snRNP, and at least 3 U1 snRNP-specific proteins U1-70K, U1-A and U1-C. U1-C interacts with U1 snRNA and the 5' splice-site region of the pre-mRNA.

Its subcellular location is the nucleus. In terms of biological role, component of the spliceosomal U1 snRNP, which is essential for recognition of the pre-mRNA 5' splice-site and the subsequent assembly of the spliceosome. U1-C is directly involved in initial 5' splice-site recognition for both constitutive and regulated alternative splicing. The interaction with the 5' splice-site seems to precede base-pairing between the pre-mRNA and the U1 snRNA. Stimulates commitment or early (E) complex formation by stabilizing the base pairing of the 5' end of the U1 snRNA and the 5' splice-site region. In Aspergillus fumigatus (strain ATCC MYA-4609 / CBS 101355 / FGSC A1100 / Af293) (Neosartorya fumigata), this protein is U1 small nuclear ribonucleoprotein C.